The primary structure comprises 393 residues: Neuroplastin (393 aa).

Positions 1-28 (MSGSSLPGALALSLLLVSGSLLPGPGAA) are cleaved as a signal peptide. 3 consecutive Ig-like domains span residues 29–134 (QNAG…PSIT), 148–234 (PRIV…IEVK), and 237–327 (PDIT…ASVS). Residues 29–338 (QNAGFVKSPM…VLRVRSHLAP (310 aa)) lie on the Extracellular side of the membrane. An intrachain disulfide couples C52 to C116. Positions 149–161 (RIVTSEEVIIRDS) are narpin; mediates binding with FGFR1 and has antidepressant-like activity. C169 and C217 are disulfide-bonded. Residues N170, N196, N228, N283, N295, and N316 are each glycosylated (N-linked (GlcNAc...) asparagine). The cysteines at positions 258 and 315 are disulfide-linked. A helical membrane pass occupies residues 339–359 (LWPFLGILAEIIILVVIIVVY). Residues 360–393 (EKRKRPDEVPDAGPMKTNSTNNHKDKNLRQRNTN) are Cytoplasmic-facing. Residues 366–393 (DEVPDAGPMKTNSTNNHKDKNLRQRNTN) are disordered.

As to quaternary structure, interacts with ATP2B1; this interaction stabilizes ATP2B1 and increases ATPase activity; this interaction controls T cell calcium homeostasis following T cell activation. Interacts with XKR8; promoting its localization at the cell membrane. Post-translationally, isoform 1 and isoform 2 are N-glycosylated. In terms of tissue distribution, isoform 1 is ubiquitously expressed. Isoform 2 is brain-specific. In brain isoform 2 is highly expressed in hippocampus and cerebral cortex and weakly in cerebellum and lower brain regions. In the hippocampus isoform 2 is found in the dentate gyrus and CA1-CA4, the striatum oriens of CA3 shows the higher level.

It is found in the cell membrane. Its subcellular location is the postsynaptic density. Functionally, probable homophilic and heterophilic cell adhesion molecule involved in long term potentiation at hippocampal excitatory synapses through activation of p38MAPK. May also regulate neurite outgrowth by activating the FGFR1 signaling pathway. May play a role in synaptic plasticity. Also acts as a chaperone for ATP2B1; stabilizes ATP2B1 and increases its ATPase activity. Promotes localization of XKR8 at the cell membrane. This is Neuroplastin (Nptn) from Rattus norvegicus (Rat).